A 342-amino-acid polypeptide reads, in one-letter code: Olfactory receptor 51F2 (342 aa).

At 1–39 (MTETSLSSQCFPMSVLNNTIAEPLIFLLMGIPGLKATQY) the chain is on the extracellular side. Asn17 carries an N-linked (GlcNAc...) asparagine glycan. Residues 40-60 (WISIPFCLLYVVAVSGNSMIL) traverse the membrane as a helical segment. The Cytoplasmic portion of the chain corresponds to 61 to 68 (FVVLCERS). A helical membrane pass occupies residues 69–89 (LHKPMYYFLSMLSATDLSLSL). At 90-113 (CTLSTTLGVFWFEAREINLNACIA) the chain is on the extracellular side. Cys111 and Cys203 are oxidised to a cystine. A helical transmembrane segment spans residues 114–134 (QMFFLHGFTFMESGVLLAMAF). The Cytoplasmic segment spans residues 135 to 153 (DRFVAICYPLRYTTILTNA). The chain crosses the membrane as a helical span at residues 154-174 (RIAKIGMSMLIRNVAVMLPVM). Over 175–210 (LFVKRLSFCSSMVLSHSYCYHVDLIQLSCTDNRINS) the chain is Extracellular. Residues 211-231 (ILGLFALLSTTGFDCPCILLS) traverse the membrane as a helical segment. Topologically, residues 232 to 251 (YILIIRSVLSIASSEERRKA) are cytoplasmic. The helical transmembrane segment at 252–272 (FNTCTSHISAVSIFYLPLISL) threads the bilayer. At 273–287 (SLVHRYGHSAPPFVH) the chain is on the extracellular side. A helical transmembrane segment spans residues 288–308 (IIMANVFLLIPPVLNPIIYSV). Residues 309 to 342 (KIKQIQKAIIKVLIQKHSKSNHQLFLIRDKAIYE) are Cytoplasmic-facing.

It belongs to the G-protein coupled receptor 1 family.

It is found in the cell membrane. In terms of biological role, odorant receptor. This chain is Olfactory receptor 51F2 (OR51F2), found in Homo sapiens (Human).